The chain runs to 123 residues: Fluoride-specific ion channel FluC 2 (123 aa).

Transmembrane regions (helical) follow at residues 1–21 (MTML…FLLD) and 30–50 (VPVP…LGLI). Na(+)-binding residues include Gly74 and Thr77. A helical transmembrane segment spans residues 99-119 (ALHCMGMAIAGVLAAILGLAL).

It belongs to the fluoride channel Fluc/FEX (TC 1.A.43) family.

The protein resides in the cell membrane. The catalysed reaction is fluoride(in) = fluoride(out). With respect to regulation, na(+) is not transported, but it plays an essential structural role and its presence is essential for fluoride channel function. Fluoride-specific ion channel. Important for reducing fluoride concentration in the cell, thus reducing its toxicity. The chain is Fluoride-specific ion channel FluC 2 from Cutibacterium acnes (strain DSM 16379 / KPA171202) (Propionibacterium acnes).